A 460-amino-acid chain; its full sequence is 7-cyano-7-deazaguanine synthase 2 (460 aa).

Catalysis depends on C2, which acts as the For GATase activity. One can recognise a Glutamine amidotransferase type-2 domain in the interval 2–225 (CSVTGVLIIK…PYSIVEVNDN (224 aa)). Position 245–255 (245–255 (ASGGLDSTVAA)) interacts with ATP. Zn(2+) contacts are provided by C426, C434, C437, and C440.

Belongs to the QueC family. The cofactor is Zn(2+).

The enzyme catalyses 7-carboxy-7-deazaguanine + NH4(+) + ATP = 7-cyano-7-deazaguanine + ADP + phosphate + H2O + H(+). The protein operates within purine metabolism; 7-cyano-7-deazaguanine biosynthesis. Its function is as follows. Catalyzes the ATP-dependent conversion of 7-carboxy-7-deazaguanine (CDG) to 7-cyano-7-deazaguanine (preQ(0)). This chain is 7-cyano-7-deazaguanine synthase 2 (queC2), found in Sulfurisphaera tokodaii (strain DSM 16993 / JCM 10545 / NBRC 100140 / 7) (Sulfolobus tokodaii).